The following is a 587-amino-acid chain: Protein POF1B (587 aa).

A coiled-coil region spans residues 331-529; that stretch reads STFSNIREEL…EELSKLRQEI (199 aa).

Interacts with nonmuscle actin. Expression absent in adult ovary.

Its subcellular location is the cell junction. The protein localises to the tight junction. Functionally, plays a key role in the organization of epithelial monolayers by regulating the actin cytoskeleton. May be involved in ovary development. The chain is Protein POF1B (Pof1b) from Mus musculus (Mouse).